The chain runs to 589 residues: Putative phospholipase B-like 2 (589 aa).

Positions 1-41 (MVAPMYGSPGGRLARAVTRALALALVLALLVGLFLSGLTGA) are cleaved as a signal peptide. N-linked (GlcNAc...) asparagine glycans are attached at residues N88 and N110. A disulfide bond links C142 and C152. N-linked (GlcNAc...) asparagine glycans are attached at residues N174, N231, N436, and N465. C492 and C495 are disulfide-bonded. N515 carries an N-linked (GlcNAc...) asparagine glycan.

It belongs to the phospholipase B-like family. Interacts with IGF2R. In terms of processing, glycosylated; contains mannose 6-phosphate sugars.

The protein localises to the lysosome lumen. Its function is as follows. Putative phospholipase. This is Putative phospholipase B-like 2 (PLBD2) from Bos taurus (Bovine).